The primary structure comprises 290 residues: Nucleotide-binding protein XF_1405 (290 aa).

Residue 13–20 (GLSGSGKS) participates in ATP binding. A GTP-binding site is contributed by 65 to 68 (DIRS).

This sequence belongs to the RapZ-like family.

Functionally, displays ATPase and GTPase activities. The protein is Nucleotide-binding protein XF_1405 of Xylella fastidiosa (strain 9a5c).